Reading from the N-terminus, the 184-residue chain is Protein GrpE (184 aa).

A disordered region spans residues Met1 to Pro35.

The protein belongs to the GrpE family. In terms of assembly, homodimer.

It is found in the cytoplasm. Functionally, participates actively in the response to hyperosmotic and heat shock by preventing the aggregation of stress-denatured proteins, in association with DnaK and GrpE. It is the nucleotide exchange factor for DnaK and may function as a thermosensor. Unfolded proteins bind initially to DnaJ; upon interaction with the DnaJ-bound protein, DnaK hydrolyzes its bound ATP, resulting in the formation of a stable complex. GrpE releases ADP from DnaK; ATP binding to DnaK triggers the release of the substrate protein, thus completing the reaction cycle. Several rounds of ATP-dependent interactions between DnaJ, DnaK and GrpE are required for fully efficient folding. In Polynucleobacter asymbioticus (strain DSM 18221 / CIP 109841 / QLW-P1DMWA-1) (Polynucleobacter necessarius subsp. asymbioticus), this protein is Protein GrpE.